A 192-amino-acid chain; its full sequence is Potassium channel HX13_20290 (192 aa).

Residues 1–24 (MTKGRLEAFSDGVLAIIITIMVLE) form a helical membrane-spanning segment. The RxxxFSD motif signature appears at 5–11 (RLEAFSD). A topological domain (cytoplasmic) is located at residue leucine 25. Residues 26–29 (KVPE) are short helix H1. Topologically, residues 26-39 (KVPEGSSWASLQPI) are extracellular. The segment at 31 to 37 (SSWASLQ) is short helix H2. A helical membrane pass occupies residues 40–65 (LPRFLAYIFSFIYVGIYWNNHHHLFQ). Over 66 to 71 (TVKKVN) the chain is Cytoplasmic. The chain crosses the membrane as a helical span at residues 72 to 93 (GSILWANLHLLFWLSLMPIATE). The Extracellular segment spans residues 94-101 (WIGTSHFA). Residues 102 to 126 (QNPVATYGIGLIMSAIAYTILENVI) traverse the membrane as a helical segment. Residues 127–133 (IRCEGEN) are Cytoplasmic-facing. The helical transmembrane segment at 134–162 (SKLKEAIHSKFKEYISIIFYVLGIATSFF) threads the bilayer. The Extracellular portion of the chain corresponds to 163–164 (YP). Residues 165-180 (YIAIGFYYLVALIWLI) form a helical membrane-spanning segment. Over 181-192 (PDKRIEKSLKEN) the chain is Cytoplasmic.

Belongs to the TMEM175 family. In terms of assembly, homotetramer.

The protein localises to the membrane. It carries out the reaction K(+)(in) = K(+)(out). In terms of biological role, potassium channel. In Chryseobacterium sp. (strain P1-3), this protein is Potassium channel HX13_20290.